A 100-amino-acid polypeptide reads, in one-letter code: Biogenesis of lysosome-related organelles complex 1 subunit CNL1 (100 aa).

Residues 25 to 46 are a coiled coil; it reads SDRVKSLELEATRLVQRQNELV.

It belongs to the BLOC1S4 family. As to quaternary structure, component of the biogenesis of lysosome-related organelles complex-1 (BLOC-1).

Its subcellular location is the cytoplasm. In terms of biological role, component of the biogenesis of lysosome-related organelles complex-1 (BLOC-1), a complex that is involved in endosomal cargo sorting. The protein is Biogenesis of lysosome-related organelles complex 1 subunit CNL1 (CLN1) of Candida glabrata (strain ATCC 2001 / BCRC 20586 / JCM 3761 / NBRC 0622 / NRRL Y-65 / CBS 138) (Yeast).